A 332-amino-acid polypeptide reads, in one-letter code: Glycerol-3-phosphate dehydrogenase [NAD(P)+] (332 aa).

The NADPH site is built by Trp11, Arg30, and Lys108. Positions 108, 137, and 139 each coordinate sn-glycerol 3-phosphate. Ala141 contributes to the NADPH binding site. Sn-glycerol 3-phosphate-binding residues include Lys192, Asp245, Ser255, Arg256, and Asn257. The active-site Proton acceptor is Lys192. Arg256 serves as a coordination point for NADPH. Positions 280 and 282 each coordinate NADPH.

This sequence belongs to the NAD-dependent glycerol-3-phosphate dehydrogenase family.

It is found in the cytoplasm. The catalysed reaction is sn-glycerol 3-phosphate + NAD(+) = dihydroxyacetone phosphate + NADH + H(+). It carries out the reaction sn-glycerol 3-phosphate + NADP(+) = dihydroxyacetone phosphate + NADPH + H(+). The protein operates within membrane lipid metabolism; glycerophospholipid metabolism. Catalyzes the reduction of the glycolytic intermediate dihydroxyacetone phosphate (DHAP) to sn-glycerol 3-phosphate (G3P), the key precursor for phospholipid synthesis. The chain is Glycerol-3-phosphate dehydrogenase [NAD(P)+] from Burkholderia thailandensis (strain ATCC 700388 / DSM 13276 / CCUG 48851 / CIP 106301 / E264).